A 231-amino-acid polypeptide reads, in one-letter code: Uracil-DNA glycosylase (231 aa).

Asp-74 acts as the Proton acceptor in catalysis.

It belongs to the uracil-DNA glycosylase (UDG) superfamily. UNG family.

It localises to the cytoplasm. It carries out the reaction Hydrolyzes single-stranded DNA or mismatched double-stranded DNA and polynucleotides, releasing free uracil.. Its function is as follows. Excises uracil residues from the DNA which can arise as a result of misincorporation of dUMP residues by DNA polymerase or due to deamination of cytosine. The chain is Uracil-DNA glycosylase from Campylobacter jejuni subsp. jejuni serotype O:23/36 (strain 81-176).